A 150-amino-acid polypeptide reads, in one-letter code: Large ribosomal subunit protein bL9 (150 aa).

It belongs to the bacterial ribosomal protein bL9 family.

In terms of biological role, binds to the 23S rRNA. This is Large ribosomal subunit protein bL9 from Streptococcus pneumoniae (strain CGSP14).